The following is a 305-amino-acid chain: Tetraspanin-12 (305 aa).

The Cytoplasmic portion of the chain corresponds to 1 to 12 (MAREDSVKCLRC). 2 S-palmitoyl cysteine lipidation sites follow: C9 and C12. Residues 13–33 (LLYALNLLFWLMSISVLAVSA) form a helical membrane-spanning segment. At 34–59 (WMRDYLNNVLTLTAETRVEEAVILTY) the chain is on the extracellular side. The helical transmembrane segment at 60-80 (FPVVHPVMIAVCCFLIIVGML) threads the bilayer. A lipid anchor (S-palmitoyl cysteine) is attached at C83. Residues 90–110 (LLLLAWYFGTLLVIFCVELAC) traverse the membrane as a helical segment. At 111 to 224 (GVWTYEQEVM…RGTKQLQVLR (114 aa)) the chain is on the extracellular side. Residues 225 to 245 (FLGISIGVTQILAMILTITLL) form a helical membrane-spanning segment. Over 246 to 305 (WALYYDRREPGTDQMLSLKNDASQHLSCHSVELLKPSLSRIFEHTSMANSFNTHFEMEEL) the chain is Cytoplasmic.

It belongs to the tetraspanin (TM4SF) family. Component of a complex, at least composed of TSPAN12, FZD4 and norrin (NDP). Interacts (when palmitoylated) with ADAM10. Interacts with MMP14/MT1-MMP. In terms of processing, palmitoylated; required for interaction with ADAM10. The precise position of palmitoylated residues is unclear and occurs either on Cys-9, Cys-12 and/or Cys-83.

It localises to the cell membrane. Its function is as follows. Regulator of cell surface receptor signal transduction. Plays a central role in retinal vascularization by regulating norrin (NDP) signal transduction. Acts in concert with norrin (NDP) to promote FZD4 multimerization and subsequent activation of FZD4, leading to promote accumulation of beta-catenin (CTNNB1) and stimulate LEF/TCF-mediated transcriptional programs. Suprisingly, it only activates the norrin (NDP)-dependent activation of FZD4, while it does not activate the Wnt-dependent activation of FZD4, suggesting the existence of a Wnt-independent signaling that also promote accumulation the beta-catenin (CTNNB1). Acts as a regulator of membrane proteinases such as ADAM10 and MMP14/MT1-MMP. Activates ADAM10-dependent cleavage activity of amyloid precursor protein (APP). Activates MMP14/MT1-MMP-dependent cleavage activity. This is Tetraspanin-12 (Tspan12) from Rattus norvegicus (Rat).